The sequence spans 317 residues: Acetyl-coenzyme A carboxylase carboxyl transferase subunit alpha (317 aa).

In terms of domain architecture, CoA carboxyltransferase C-terminal spans Asn-32 to Ala-293.

The protein belongs to the AccA family. In terms of assembly, acetyl-CoA carboxylase is a heterohexamer composed of biotin carboxyl carrier protein (AccB), biotin carboxylase (AccC) and two subunits each of ACCase subunit alpha (AccA) and ACCase subunit beta (AccD).

The protein resides in the cytoplasm. The enzyme catalyses N(6)-carboxybiotinyl-L-lysyl-[protein] + acetyl-CoA = N(6)-biotinyl-L-lysyl-[protein] + malonyl-CoA. It functions in the pathway lipid metabolism; malonyl-CoA biosynthesis; malonyl-CoA from acetyl-CoA: step 1/1. Its function is as follows. Component of the acetyl coenzyme A carboxylase (ACC) complex. First, biotin carboxylase catalyzes the carboxylation of biotin on its carrier protein (BCCP) and then the CO(2) group is transferred by the carboxyltransferase to acetyl-CoA to form malonyl-CoA. This is Acetyl-coenzyme A carboxylase carboxyl transferase subunit alpha from Legionella pneumophila (strain Paris).